Consider the following 801-residue polypeptide: Glycerol-3-phosphate acyltransferase 2, mitochondrial (801 aa).

The segment at 1-24 (METMLKSNPQMQQRNNHSGQETSL) is disordered. The Cytoplasmic portion of the chain corresponds to 1 to 305 (METMLKSNPQ…PGPRLSALGQ (305 aa)). Residues 180–290 (QLHKGQMKMV…SGQPLLIFLE (111 aa)) are acyltransferase. Residues 205–210 (HKSLLD) carry the HXXXXD motif motif. A helical membrane pass occupies residues 306 to 332 (AWLGLVVQAVQAGIVPDATLVPVATAY). Residues 333–449 (DLVPDAPCNM…QLLVRRLSRH (117 aa)) lie on the Mitochondrial intermembrane side of the membrane. A helical transmembrane segment spans residues 450 to 472 (VLSASVASSAVMSTAIMATLLLL). Residues 473 to 795 (KHQKGVVLSQ…DNQDKLEQFI (323 aa)) lie on the Cytoplasmic side of the membrane.

Belongs to the GPAT/DAPAT family. Interacts with PIWIL2. As to expression, expressed in spermatocytes and spermatides.

Its subcellular location is the mitochondrion outer membrane. The catalysed reaction is sn-glycerol 3-phosphate + an acyl-CoA = a 1-acyl-sn-glycero-3-phosphate + CoA. It catalyses the reaction a 1-acyl-sn-glycero-3-phosphate + an acyl-CoA = a 1,2-diacyl-sn-glycero-3-phosphate + CoA. It carries out the reaction 1-(9Z-octadecenoyl)-sn-glycero-3-phosphate + (9Z)-octadecenoyl-CoA = 1,2-di-(9Z-octadecenoyl)-sn-glycero-3-phosphate + CoA. The enzyme catalyses 1-(9Z-octadecenoyl)-sn-glycero-3-phosphate + (5Z,8Z,11Z,14Z)-eicosatetraenoyl-CoA = 1-(9Z)-octadecenoyl-2-(5Z,8Z,11Z,14Z)-eicosatetraenoyl-sn-glycero-3-phosphate + CoA. The catalysed reaction is (5Z,8Z,11Z,14Z)-eicosatetraenoyl-CoA + sn-glycerol 3-phosphate = 1-(5Z,8Z,11Z,14Z-eicosatetraenoyl)-sn-glycero-3-phosphate + CoA. It participates in phospholipid metabolism; CDP-diacylglycerol biosynthesis; CDP-diacylglycerol from sn-glycerol 3-phosphate: step 1/3. Inhibited by N-ethylmaleimide (NEM). Functionally, transfers an acyl-group from acyl-ACP to the sn-1 position of glycerol-3-phosphate producing a lysophosphatidic acid (LPA), an essential step for the triacylglycerol (TAG) and glycerophospholipids. In vitro also transfers an acyl-group from acyl-ACP to the LPA producing a phosphatidic acid (PA). Prefers arachidonoyl-CoA as the acyl donor. Required for primary processing step during piRNA biosynthesis. Molecular mechanisms by which it promotes piRNA biosynthesis are unclear and do not involve its acyltransferase activity. The sequence is that of Glycerol-3-phosphate acyltransferase 2, mitochondrial from Rattus norvegicus (Rat).